The chain runs to 652 residues: Acetyl-coenzyme A synthetase (652 aa).

Residues Arg-189 to Lys-192, Thr-311, and Asn-335 contribute to the CoA site. ATP contacts are provided by residues Gly-387 to Pro-389, Asp-411 to Thr-416, Asp-500, and Arg-515. Ser-523 lines the CoA pocket. Arg-526 is an ATP binding site. Mg(2+) is bound by residues Val-537, His-539, and Val-542. Position 584 (Arg-584) interacts with CoA. Lys-609 is modified (N6-acetyllysine).

It belongs to the ATP-dependent AMP-binding enzyme family. The cofactor is Mg(2+). In terms of processing, acetylated. Deacetylation by the SIR2-homolog deacetylase activates the enzyme.

It catalyses the reaction acetate + ATP + CoA = acetyl-CoA + AMP + diphosphate. Functionally, catalyzes the conversion of acetate into acetyl-CoA (AcCoA), an essential intermediate at the junction of anabolic and catabolic pathways. AcsA undergoes a two-step reaction. In the first half reaction, AcsA combines acetate with ATP to form acetyl-adenylate (AcAMP) intermediate. In the second half reaction, it can then transfer the acetyl group from AcAMP to the sulfhydryl group of CoA, forming the product AcCoA. The chain is Acetyl-coenzyme A synthetase from Rhizobium rhizogenes (strain K84 / ATCC BAA-868) (Agrobacterium radiobacter).